We begin with the raw amino-acid sequence, 346 residues long: MLKVAVVGASGYTGVELLRILHCHPEVAVTCITSEQSAGKPVSDLFPSLRGRYAQVLENLEPIRVAEKADIIFTALPHKAAMEVVPTFLKLGKRVIDLSADYRFNDAATYEQWYEPHMNPHLLPKAVYGLPEVRRAAVKGAKLVANPGCYPTSVILGLQPLLKHKLIETAGIISDSASGVSGAGRGAKVDNLYCEVNEGFKAYGVGGVHRHTPEMEQELSLLADERITITFTPHLAPMDRGILSTIYGRLLTPATTAELAGLYAEFYGGEPFVRVLPAGGVPSTAHVRGSNFCDIGVVVDQRTGRVIVVSAIDNLVKGASGQAVQNMNIMCGLPEGLGLEGLALVP.

Residue Cys149 is part of the active site.

This sequence belongs to the NAGSA dehydrogenase family. Type 1 subfamily.

The protein localises to the cytoplasm. The enzyme catalyses N-acetyl-L-glutamate 5-semialdehyde + phosphate + NADP(+) = N-acetyl-L-glutamyl 5-phosphate + NADPH + H(+). It functions in the pathway amino-acid biosynthesis; L-arginine biosynthesis; N(2)-acetyl-L-ornithine from L-glutamate: step 3/4. Catalyzes the NADPH-dependent reduction of N-acetyl-5-glutamyl phosphate to yield N-acetyl-L-glutamate 5-semialdehyde. The chain is N-acetyl-gamma-glutamyl-phosphate reductase from Geobacter sulfurreducens (strain ATCC 51573 / DSM 12127 / PCA).